We begin with the raw amino-acid sequence, 266 residues long: Undecaprenyl-diphosphatase (266 aa).

Helical transmembrane passes span 38-58 (SDMF…IIYW), 80-100 (LIVA…VLHF), 108-128 (PIAW…WAAA), 136-156 (ITWL…IFPG), 176-196 (AAAT…ASGY), 217-237 (IAFV…LAYI), and 245-265 (FAVY…TGLI).

Belongs to the UppP family.

The protein localises to the cell inner membrane. The enzyme catalyses di-trans,octa-cis-undecaprenyl diphosphate + H2O = di-trans,octa-cis-undecaprenyl phosphate + phosphate + H(+). Functionally, catalyzes the dephosphorylation of undecaprenyl diphosphate (UPP). Confers resistance to bacitracin. This is Undecaprenyl-diphosphatase from Rhizobium leguminosarum bv. trifolii (strain WSM2304).